The primary structure comprises 292 residues: Ribosomal protein L11 methyltransferase (292 aa).

S-adenosyl-L-methionine is bound by residues threonine 144, glycine 165, aspartate 187, and asparagine 229.

It belongs to the methyltransferase superfamily. PrmA family.

The protein localises to the cytoplasm. It catalyses the reaction L-lysyl-[protein] + 3 S-adenosyl-L-methionine = N(6),N(6),N(6)-trimethyl-L-lysyl-[protein] + 3 S-adenosyl-L-homocysteine + 3 H(+). In terms of biological role, methylates ribosomal protein L11. The protein is Ribosomal protein L11 methyltransferase of Ectopseudomonas mendocina (strain ymp) (Pseudomonas mendocina).